The following is a 691-amino-acid chain: Pentatricopeptide repeat-containing protein At5g27110 (691 aa).

PPR repeat units lie at residues 38-68 (DVVL…FDIR), 70-104 (DVYI…SICV), 106-140 (DSFT…GYVC), 141-171 (DVVV…MPER), 172-206 (DVAS…GFEP), 207-241 (NSVS…GFEL), 242-272 (DEYV…MPRK), 273-307 (SLVA…GTRP), 308-342 (SQTT…VVNA), 343-373 (DIYV…TQKD), 374-408 (VAES…GVKP), 409-443 (DVVT…RLET), 444-474 (DELL…IPKK), 475-509 (DVVS…GLKP), 510-540 (DGVT…MRSK), and 546-576 (IIEH…TPET). The tract at residues 582-657 (LLSTLFSACC…KPGCSWIEMS (76 aa)) is type E motif. Residues 658–688 (DKVCHFFAEDRSHLRAENVYECLALLSGHME) form a type E(+) motif region.

Belongs to the PPR family. PCMP-E subfamily.

This is Pentatricopeptide repeat-containing protein At5g27110 (PCMP-E14) from Arabidopsis thaliana (Mouse-ear cress).